Here is a 128-residue protein sequence, read N- to C-terminus: Putative transmembrane protein 244 (128 aa).

3 helical membrane-spanning segments follow: residues 17 to 37 (FLLC…MGCV), 65 to 85 (VLLV…VPVV), and 93 to 113 (AISV…EFPL).

The protein localises to the membrane. The protein is Putative transmembrane protein 244 (TMEM244) of Homo sapiens (Human).